A 219-amino-acid polypeptide reads, in one-letter code: Germin-like protein subfamily 2 member 2 (219 aa).

The N-terminal stretch at 1 to 22 (MMNSRISIIIALSCIMITSIRA) is a signal peptide. The cysteines at positions 32 and 47 are disulfide-linked. 2 N-linked (GlcNAc...) asparagine glycosylation sites follow: Asn52 and Asn70. Residues 59–209 (FFAGISKPAV…TFQVGSKMVD (151 aa)) form the Cupin type-1 domain. Residues His109, His111, Glu116, and His155 each contribute to the Mn(2+) site.

This sequence belongs to the germin family. As to quaternary structure, oligomer (believed to be a pentamer but probably hexamer).

The protein localises to the secreted. Its subcellular location is the extracellular space. The protein resides in the apoplast. Its function is as follows. May play a role in plant defense. Probably has no oxalate oxidase activity even if the active site is conserved. The chain is Germin-like protein subfamily 2 member 2 from Arabidopsis thaliana (Mouse-ear cress).